A 218-amino-acid polypeptide reads, in one-letter code: Uracil-DNA glycosylase (218 aa).

The protein belongs to the uracil-DNA glycosylase (UDG) superfamily. UNG family. In terms of assembly, homodimer. Interacts with protein OPG148. Component of the Uracil-DNA glycosylase(UDG)-OPG148-polymerase complex; OPG148 and UDG form a heterodimeric processivity factor that associates with OPG71 to form the processive polymerase holoenzyme.

It carries out the reaction Hydrolyzes single-stranded DNA or mismatched double-stranded DNA and polynucleotides, releasing free uracil.. Its function is as follows. Plays an essential role in viral replication as a component of the DNA polymerase processivity factor. Excises uracil residues from the DNA which can arise as a result of misincorporation of dUMP residues by DNA polymerase or due to deamination of cytosine. In Monkeypox virus, this protein is Uracil-DNA glycosylase (OPG116).